A 367-amino-acid chain; its full sequence is MAGNSIGQVFTVTTCGESHGAGLLAIVDGVPPGLALSEADLQIDLDRRKPGTSKYSTQRRESDEVEIISGVFEGKTTGTSIGLLIRNTNQKSKDYGEIKDTFRPGHADYTYSMKYGFRDYRGGGRSSARETAMRVAAGAIAKKYLLERLGVQIRGHVTQIGHEYSDVLNSSTIDWDFVNSNPFFCADADAVSRFETLIDSLRREGTSCGARLEIIASGVPVGLGEPVFDRLDADIAHAMMSINAVKGVEIGDGMAVAGQFGHSSRDEMTPDGFTANHAGGILGGISSGQDIRVSIALKPTSSITTAGKSINTEGEAIEMLTKGRHDPCVGVRATPIAEAMLAIVLLDHYLRHRGQNADIKQPVQSIT.

Position 48 (R48) interacts with NADP(+). FMN-binding positions include 125–127, 243–244, G283, 298–302, and R324; these read RSS, NA, and KPTSS.

The protein belongs to the chorismate synthase family. In terms of assembly, homotetramer. The cofactor is FMNH2.

The enzyme catalyses 5-O-(1-carboxyvinyl)-3-phosphoshikimate = chorismate + phosphate. It participates in metabolic intermediate biosynthesis; chorismate biosynthesis; chorismate from D-erythrose 4-phosphate and phosphoenolpyruvate: step 7/7. Its function is as follows. Catalyzes the anti-1,4-elimination of the C-3 phosphate and the C-6 proR hydrogen from 5-enolpyruvylshikimate-3-phosphate (EPSP) to yield chorismate, which is the branch point compound that serves as the starting substrate for the three terminal pathways of aromatic amino acid biosynthesis. This reaction introduces a second double bond into the aromatic ring system. The chain is Chorismate synthase from Psychrobacter cryohalolentis (strain ATCC BAA-1226 / DSM 17306 / VKM B-2378 / K5).